Consider the following 208-residue polypeptide: MTLIPIVVEQTSRGERAYDIYSRLVKERIIFVTGPIEDNMASVIVAQLLFLESENPDKDICMYINSPGGVVTAGLSIYDTMQYINPDVSTLCIGQAASMGSLLLTAGAEGKRYSLPHSRIMIHQPSGGYHGQATDIEIHANEILRVKKKLNQIYEKHTGNSLKKIEEMMERDKFMDPEEAMKTGLIDRVIAERKDMKIENIKVKQKVV.

The active-site Nucleophile is the Ser-98. The active site involves His-123.

This sequence belongs to the peptidase S14 family. Fourteen ClpP subunits assemble into 2 heptameric rings which stack back to back to give a disk-like structure with a central cavity, resembling the structure of eukaryotic proteasomes.

Its subcellular location is the cytoplasm. The catalysed reaction is Hydrolysis of proteins to small peptides in the presence of ATP and magnesium. alpha-casein is the usual test substrate. In the absence of ATP, only oligopeptides shorter than five residues are hydrolyzed (such as succinyl-Leu-Tyr-|-NHMec, and Leu-Tyr-Leu-|-Tyr-Trp, in which cleavage of the -Tyr-|-Leu- and -Tyr-|-Trp bonds also occurs).. Cleaves peptides in various proteins in a process that requires ATP hydrolysis. Has a chymotrypsin-like activity. Plays a major role in the degradation of misfolded proteins. The chain is ATP-dependent Clp protease proteolytic subunit from Wolbachia pipientis subsp. Culex pipiens (strain wPip).